The sequence spans 98 residues: MKKMQSIVLALSLVLVAPMAAQAAEITLVPSVKLQIGDRDNRGYYWDGGHWRDHGWWKQHYEWRGNRWHLHGPPPPPRHHKKAPHDHHGGHGPGKHHR.

Positions 1–23 (MKKMQSIVLALSLVLVAPMAAQA) are cleaved as a signal peptide. Residues 68 to 98 (WHLHGPPPPPRHHKKAPHDHHGGHGPGKHHR) are disordered. The segment covering 77-98 (PRHHKKAPHDHHGGHGPGKHHR) has biased composition (basic residues).

To E.coli YpeC.

This is an uncharacterized protein from Escherichia coli (strain K12).